Consider the following 60-residue polypeptide: Large ribosomal subunit protein bL32 (60 aa).

The span at 1-16 shows a compositional bias: basic residues; that stretch reads MAVPKRKTSPSKRGMR. Positions 1-60 are disordered; that stretch reads MAVPKRKTSPSKRGMRRSADALKAPTYVEDKNSGELRRPHHVDLKTGMYRGRQVLEPKEA. Basic and acidic residues predominate over residues 28–44; it reads VEDKNSGELRRPHHVDL.

This sequence belongs to the bacterial ribosomal protein bL32 family.

The polypeptide is Large ribosomal subunit protein bL32 (Chelativorans sp. (strain BNC1)).